The sequence spans 689 residues: DNA topoisomerase 1 (689 aa).

Positions 3–113 constitute a Toprim domain; sequence DNLVIVESPA…KENRVVFNEI (111 aa). Residues E9 and D82 each coordinate Mg(2+). One can recognise a Topo IA-type catalytic domain in the interval 129 to 557; that stretch reads EMNLVDAQQA…FFSSFKQDVE (429 aa). The tract at residues 163–168 is interaction with DNA; it reads SAGRVQ. Y298 acts as the O-(5'-phospho-DNA)-tyrosine intermediate in catalysis. Residues 328-357 form a disordered region; sequence SKRKASGKQGDQDAHEAIRPSSTMRTPDDM. C4-type zinc fingers lie at residues 577–603, 617–645, and 658–681; these read CEVC…FPDC, CPKC…YPEC, and CPKC…CSNC.

Belongs to the type IA topoisomerase family. In terms of assembly, monomer. Requires Mg(2+) as cofactor.

The enzyme catalyses ATP-independent breakage of single-stranded DNA, followed by passage and rejoining.. Releases the supercoiling and torsional tension of DNA, which is introduced during the DNA replication and transcription, by transiently cleaving and rejoining one strand of the DNA duplex. Introduces a single-strand break via transesterification at a target site in duplex DNA. The scissile phosphodiester is attacked by the catalytic tyrosine of the enzyme, resulting in the formation of a DNA-(5'-phosphotyrosyl)-enzyme intermediate and the expulsion of a 3'-OH DNA strand. The free DNA strand then undergoes passage around the unbroken strand, thus removing DNA supercoils. Finally, in the religation step, the DNA 3'-OH attacks the covalent intermediate to expel the active-site tyrosine and restore the DNA phosphodiester backbone. This Staphylococcus aureus (strain bovine RF122 / ET3-1) protein is DNA topoisomerase 1.